The following is a 916-amino-acid chain: Protein O-GlcNAcase (916 aa).

Residues 1–50 (MVQKESQAALEERESERNANPASVSGASLEPSAAPAPGEDNPSGAGAAAG) are disordered. The GH84 domain maps to 60–336 (FLCGVVEGFY…TLATWYKSNM (277 aa)). Residues G67, K98, and D174 each contribute to the a protein site. D175 (proton donor) is an active-site residue. Residues Y219, 278–280 (WDN), D285, and N313 each bind a protein. S364 is modified (phosphoserine). Residues 440 to 480 (QGAALSGEPSALTKEEEKKQPDEEPMDMVVEKQEESEHKSD) form a disordered region. 2 stretches are compositionally biased toward basic and acidic residues: residues 452–461 (TKEEEKKQPD) and 468–480 (VVEK…HKSD).

The protein belongs to the glycosyl hydrolase 84 family. As to quaternary structure, monomer. Interacts with CLOCK. Post-translationally, proteolytically cleaved by caspase-3 during apoptosis. The fragments interact with each other; cleavage does not decrease enzyme activity. As to expression, detected in spleen (at protein level). Ubiquitous. Expressed at highest levels in the brain and spleen.

Its subcellular location is the nucleus. The protein localises to the cytoplasm. It catalyses the reaction 3-O-(N-acetyl-beta-D-glucosaminyl)-L-seryl-[protein] + H2O = N-acetyl-D-glucosamine + L-seryl-[protein]. The enzyme catalyses 3-O-(N-acetyl-beta-D-glucosaminyl)-L-threonyl-[protein] + H2O = L-threonyl-[protein] + N-acetyl-D-glucosamine. Inhibited by Cu(2+), Hg(2+), Cd(2+) and Zn(2+) at 1 mM. Not inhibited by Co(2+), Mg(2+), Ca(2+), Mn(2+), Fe(3+) and EDTA. Also inhibited by sodium chloride at 1M and 2-amino-2-hydroxymethyl-1,3-propanediol (trishydroxymethylaminomethane) at 75 mM. Its function is as follows. Cleaves GlcNAc but not GalNAc from O-glycosylated proteins. Deglycosylates a large and diverse number of proteins, such as CRYAB, ELK1, GSDMD, LMNB1 and TAB1. Can use p-nitrophenyl-beta-GlcNAc and 4-methylumbelliferone-GlcNAc as substrates but not p-nitrophenyl-beta-GalNAc or p-nitrophenyl-alpha-GlcNAc (in vitro). Does not bind acetyl-CoA and does not have histone acetyltransferase activity. Lacks enzyme activity. This Rattus norvegicus (Rat) protein is Protein O-GlcNAcase.